A 166-amino-acid polypeptide reads, in one-letter code: Crossover junction endodeoxyribonuclease RuvC (166 aa).

Catalysis depends on residues Asp9, Glu70, and Asp144. Mg(2+) contacts are provided by Asp9, Glu70, and Asp144.

This sequence belongs to the RuvC family. In terms of assembly, homodimer which binds Holliday junction (HJ) DNA. The HJ becomes 2-fold symmetrical on binding to RuvC with unstacked arms; it has a different conformation from HJ DNA in complex with RuvA. In the full resolvosome a probable DNA-RuvA(4)-RuvB(12)-RuvC(2) complex forms which resolves the HJ. Mg(2+) serves as cofactor.

It is found in the cytoplasm. The catalysed reaction is Endonucleolytic cleavage at a junction such as a reciprocal single-stranded crossover between two homologous DNA duplexes (Holliday junction).. Functionally, the RuvA-RuvB-RuvC complex processes Holliday junction (HJ) DNA during genetic recombination and DNA repair. Endonuclease that resolves HJ intermediates. Cleaves cruciform DNA by making single-stranded nicks across the HJ at symmetrical positions within the homologous arms, yielding a 5'-phosphate and a 3'-hydroxyl group; requires a central core of homology in the junction. The consensus cleavage sequence is 5'-(A/T)TT(C/G)-3'. Cleavage occurs on the 3'-side of the TT dinucleotide at the point of strand exchange. HJ branch migration catalyzed by RuvA-RuvB allows RuvC to scan DNA until it finds its consensus sequence, where it cleaves and resolves the cruciform DNA. The protein is Crossover junction endodeoxyribonuclease RuvC of Neorickettsia sennetsu (strain ATCC VR-367 / Miyayama) (Ehrlichia sennetsu).